Consider the following 188-residue polypeptide: Apolipoprotein M (188 aa).

Residues 1-22 (MFHQIWAALLYFYGIILNSIYQ) constitute a signal peptide (not cleaved). Intrachain disulfides connect cysteine 23–cysteine 167, cysteine 95–cysteine 183, and cysteine 128–cysteine 157. Asparagine 135 carries an N-linked (GlcNAc...) asparagine glycan. Glutamate 136 and arginine 143 together coordinate tetradecanoate.

The protein belongs to the calycin superfamily. Lipocalin family. Highly divergent. In terms of assembly, interacts with LRP2; LRP2 mediates APOM renal uptake and subsequent lysosomal degradation.

It is found in the secreted. Probably involved in lipid transport. Can bind sphingosine-1-phosphate, myristic acid, palmitic acid and stearic acid, retinol, all-trans-retinoic acid and 9-cis-retinoic acid. This Pongo abelii (Sumatran orangutan) protein is Apolipoprotein M (APOM).